The following is a 487-amino-acid chain: Anthocyanidin 3-O-glucosyltransferase 5 (487 aa).

His-22 serves as the catalytic Proton acceptor. His-22 lines the an anthocyanidin pocket. Asp-119 (charge relay) is an active-site residue. Gln-354, His-369, Trp-372, Asn-373, Ser-374, and Glu-377 together coordinate UDP-alpha-D-glucose. Ala-392 is an an anthocyanidin binding site. Residues Glu-393 and Gln-394 each contribute to the UDP-alpha-D-glucose site.

It belongs to the UDP-glycosyltransferase family. In terms of tissue distribution, faintly expressed in cotyledons.

It catalyses the reaction an anthocyanidin + UDP-alpha-D-glucose + H(+) = an anthocyanidin 3-O-beta-D-glucoside + UDP. It participates in pigment biosynthesis; anthocyanin biosynthesis. In the presence of other necessary color factors, this glycosylation reaction allows the accumulation of anthocyanin pigments. The protein is Anthocyanidin 3-O-glucosyltransferase 5 (GT5) of Manihot esculenta (Cassava).